The primary structure comprises 155 residues: Cardioactive peptide (155 aa).

A signal peptide spans 1–23 (MRTSMRISLRLLALLACAICSQA). A propeptide spanning residues 24–49 (SLERENNEGTNMANHKLSGVIQWKYE) is cleaved from the precursor. A disulfide bond links C54 and C60. Cysteine amide is present on C60. The propeptide occupies 64 to 155 (RTYPSYPPFS…MQQLEERESK (92 aa)). A disordered region spans residues 135-155 (NKQKMLQNEKEMQQLEERESK). The span at 141 to 155 (QNEKEMQQLEERESK) shows a compositional bias: basic and acidic residues.

As to expression, central nervous system; most neurons exhibit coexpression with Burs.

Its subcellular location is the secreted. In terms of biological role, cardioregulatory neurohormone that increases heart beat rate during adult wing inflation; has no effect on beat amplitude. The effect of CCAP is both ino- and chronotropic. The sequence is that of Cardioactive peptide from Drosophila melanogaster (Fruit fly).